The following is a 626-amino-acid chain: Mini-chromosome maintenance complex-binding protein (626 aa).

Disordered regions lie at residues 152–216 and 265–287; these read STSY…LDLN and PSSL…AHDP. The span at 177–196 shows a compositional bias: basic and acidic residues; sequence KQREPHTEPHGNGDSKRQET. Positions 197-210 are enriched in polar residues; it reads EAPSSQTTAPSDCS.

The protein belongs to the MCMBP family. As to quaternary structure, interacts with the mcm complex: associates with the mcm3-7 complex which lacks mcm2, while it does not interact with the mcm complex when mcm2 is present (mcm2-7 complex).

The protein resides in the nucleus. In terms of biological role, associated component of the mcm complex that acts as a regulator of DNA replication. Binds to the MCM complex during late S phase and promotes the disassembly of the mcm complex from chromatin, thereby acting as a key regulator of pre-replication complex (pre-RC) unloading from replicated DNA. Can dissociate the mcm complex without addition of ATP; probably acts by destabilizing interactions of each individual subunits of the mcm complex. Required for sister chromatid cohesion. This is Mini-chromosome maintenance complex-binding protein (mcmbp) from Salmo salar (Atlantic salmon).